The chain runs to 295 residues: NADPH-dependent reductive aminase (295 aa).

The first 18 residues, 1–18 (MSKHIGIFGLGAMGTALA), serve as a signal peptide directing secretion. 6 to 20 (GIFGLGAMGTALAAK) lines the NADP(+) pocket.

This sequence belongs to the HIBADH-related family. As to quaternary structure, homodimer. NADPH serves as cofactor.

Functionally, NADPH-dependent reductive aminase that catalyzes the reductive coupling of a broad set of carbonyl compounds with a variety of primary and secondary amines. Possesses remarkably high activity for the reductive amination of ketones and amines, often with high stereoselectivity and in some cases with ketone:amine ratios as low as 1:1. The cofactor NADPH, the carbonyl compound and the amine are added to the enzyme in that sequence, followed by the release of product, NADP(+) being released at last. RedAm is also able to act in the reverse, oxidative direction and exhibits activity in the dehydrogenation of amines to yield imines. The highest activity is found for 1-methyl-tetrahydroquinoline and acyclic amines are also found to be transformed. The chain is NADPH-dependent reductive aminase from Aspergillus oryzae (strain ATCC 42149 / RIB 40) (Yellow koji mold).